We begin with the raw amino-acid sequence, 309 residues long: L-aminoadipate-semialdehyde dehydrogenase-phosphopantetheinyl transferase (309 aa).

Residues arginine 47, 86–91 (RTSKGK), and 108–111 (NISH) contribute to the CoA site. Mg(2+) contacts are provided by aspartate 129 and glutamate 181. 181-185 (ESFIK) lines the CoA pocket.

It belongs to the P-Pant transferase superfamily. AcpS family. Monomer. Mg(2+) is required as a cofactor.

The protein resides in the cytoplasm. Its subcellular location is the cytosol. The enzyme catalyses apo-[ACP] + CoA = holo-[ACP] + adenosine 3',5'-bisphosphate + H(+). The catalysed reaction is apo-[ACP] + acetyl-CoA = acetyl-[ACP] + adenosine 3',5'-bisphosphate + H(+). In terms of biological role, catalyzes the post-translational modification of target proteins by phosphopantetheine. Can transfer the 4'-phosphopantetheine moiety from coenzyme A, regardless of whether the CoA is presented in the free thiol form or as an acetyl thioester, to a serine residue of a broad range of acceptors including the acyl carrier domain of FASN. In Mus musculus (Mouse), this protein is L-aminoadipate-semialdehyde dehydrogenase-phosphopantetheinyl transferase (Aasdhppt).